Reading from the N-terminus, the 62-residue chain is Photosystem II reaction center protein Z (62 aa).

2 helical membrane passes run 8-28 and 41-61; these read AVFALIATSSILLISVPVVFS and FSGTSLWIGLVFLVGILNSLI.

The protein belongs to the PsbZ family. In terms of assembly, PSII is composed of 1 copy each of membrane proteins PsbA, PsbB, PsbC, PsbD, PsbE, PsbF, PsbH, PsbI, PsbJ, PsbK, PsbL, PsbM, PsbT, PsbY, PsbZ, Psb30/Ycf12, at least 3 peripheral proteins of the oxygen-evolving complex and a large number of cofactors. It forms dimeric complexes.

It localises to the plastid. The protein resides in the chloroplast thylakoid membrane. Its function is as follows. May control the interaction of photosystem II (PSII) cores with the light-harvesting antenna, regulates electron flow through the 2 photosystem reaction centers. PSII is a light-driven water plastoquinone oxidoreductase, using light energy to abstract electrons from H(2)O, generating a proton gradient subsequently used for ATP formation. This chain is Photosystem II reaction center protein Z, found in Populus alba (White poplar).